The chain runs to 124 residues: Group 1 truncated hemoglobin GlbN (124 aa).

Heme is bound by residues histidine 46, histidine 70, and histidine 117.

This sequence belongs to the truncated hemoglobin family. Group I subfamily. As to quaternary structure, monomer. It depends on heme as a cofactor.

In terms of biological role, forms a very stable complex with oxygen. The oxygen dissociation rate is 0.011 sec(-1). This is Group 1 truncated hemoglobin GlbN (glbN) from Synechocystis sp. (strain ATCC 27184 / PCC 6803 / Kazusa).